The primary structure comprises 212 residues: B3 domain-containing protein Os04g0386900 (212 aa).

The disordered stretch occupies residues 1 to 78 (MRAATALPSI…PRPPEPEPEK (78 aa)). 2 stretches are compositionally biased toward low complexity: residues 8-23 (PSIPSSSSPSPMASDP) and 36-46 (DAGAEDPAAVD). The TF-B3 DNA-binding region spans 93-191 (FTCIMCKSHV…EFRVQVLRAE (99 aa)).

Its subcellular location is the nucleus. This is B3 domain-containing protein Os04g0386900 from Oryza sativa subsp. japonica (Rice).